The following is a 516-amino-acid chain: Cytochrome P450 1A2 (516 aa).

An O-linked (GlcNAc) serine glycan is attached at Ser69. Phe226 serves as a coordination point for substrate. Residue Cys458 participates in heme binding.

It belongs to the cytochrome P450 family. Interacts with PGRMC1; the interaction requires PGRMC1 homodimerization. It depends on heme as a cofactor. In terms of tissue distribution, liver.

The protein resides in the endoplasmic reticulum membrane. It localises to the microsome membrane. The enzyme catalyses an organic molecule + reduced [NADPH--hemoprotein reductase] + O2 = an alcohol + oxidized [NADPH--hemoprotein reductase] + H2O + H(+). It catalyses the reaction 17beta-estradiol + reduced [NADPH--hemoprotein reductase] + O2 = 2-hydroxy-17beta-estradiol + oxidized [NADPH--hemoprotein reductase] + H2O + H(+). It carries out the reaction 17beta-estradiol + reduced [NADPH--hemoprotein reductase] + O2 = 4-hydroxy-17beta-estradiol + oxidized [NADPH--hemoprotein reductase] + H2O + H(+). The catalysed reaction is estrone + reduced [NADPH--hemoprotein reductase] + O2 = 2-hydroxyestrone + oxidized [NADPH--hemoprotein reductase] + H2O + H(+). The enzyme catalyses estrone + reduced [NADPH--hemoprotein reductase] + O2 = 4-hydroxyestrone + oxidized [NADPH--hemoprotein reductase] + H2O + H(+). It catalyses the reaction cholesterol + reduced [NADPH--hemoprotein reductase] + O2 = 25-hydroxycholesterol + oxidized [NADPH--hemoprotein reductase] + H2O + H(+). It carries out the reaction all-trans-retinol + reduced [NADPH--hemoprotein reductase] + O2 = all-trans-retinal + oxidized [NADPH--hemoprotein reductase] + 2 H2O + H(+). The catalysed reaction is all-trans-retinal + reduced [NADPH--hemoprotein reductase] + O2 = all-trans-retinoate + oxidized [NADPH--hemoprotein reductase] + H2O + 2 H(+). The enzyme catalyses (5Z,8Z,11Z,14Z)-eicosatetraenoate + reduced [NADPH--hemoprotein reductase] + O2 = (14R,15S)-epoxy-(5Z,8Z,11Z)-eicosatrienoate + oxidized [NADPH--hemoprotein reductase] + H2O + H(+). It catalyses the reaction (5Z,8Z,11Z,14Z)-eicosatetraenoate + reduced [NADPH--hemoprotein reductase] + O2 = (14S,15R)-epoxy-(5Z,8Z,11Z)-eicosatrienoate + oxidized [NADPH--hemoprotein reductase] + H2O + H(+). It carries out the reaction (5Z,8Z,11Z,14Z,17Z)-eicosapentaenoate + reduced [NADPH--hemoprotein reductase] + O2 = (17R,18S)-epoxy-(5Z,8Z,11Z,14Z)-eicosatetraenoate + oxidized [NADPH--hemoprotein reductase] + H2O + H(+). The catalysed reaction is (4Z,7Z,10Z,13Z,16Z,19Z)-docosahexaenoate + reduced [NADPH--hemoprotein reductase] + O2 = (19R,20S)-epoxy-(4Z,7Z,10Z,13Z,16Z)-docosapentaenoate + oxidized [NADPH--hemoprotein reductase] + H2O + H(+). The enzyme catalyses (5S)-hydroperoxy-(6E,8Z,11Z,14Z)-eicosatetraenoate = 5-oxo-(6E,8Z,11Z,14Z)-eicosatetraenoate + H2O. It catalyses the reaction (12S)-hydroperoxy-(5Z,8Z,10E,14Z)-eicosatetraenoate = 12-oxo-(5Z,8Z,10E,14Z)-eicosatetraenoate + H2O. It carries out the reaction (15S)-hydroperoxy-(5Z,8Z,11Z,13E)-eicosatetraenoate = 15-oxo-(5Z,8Z,11Z,13E)-eicosatetraenoate + H2O. The catalysed reaction is (13S)-hydroperoxy-(9Z,11E)-octadecadienoate = 13-oxo-(9Z,11E)-octadecadienoate + H2O. The enzyme catalyses (5Z,8Z,11Z,14Z)-eicosatetraenoate + reduced [NADPH--hemoprotein reductase] + O2 = 13-hydroxy-(5Z,8Z,11Z,14Z)-eicosatetraenoate + oxidized [NADPH--hemoprotein reductase] + H2O + H(+). It catalyses the reaction (5Z,8Z,11Z,14Z)-eicosatetraenoate + reduced [NADPH--hemoprotein reductase] + O2 = 19-hydroxy-(5Z,8Z,11Z,14Z)-eicosatetraenoate + oxidized [NADPH--hemoprotein reductase] + H2O + H(+). It carries out the reaction (9Z,12Z)-octadecadienoate + reduced [NADPH--hemoprotein reductase] + O2 = 11-hydroxy-(9Z,12Z)-octadecadienoate + oxidized [NADPH--hemoprotein reductase] + H2O + H(+). Its pathway is cofactor metabolism; retinol metabolism. It participates in steroid metabolism; cholesterol metabolism. It functions in the pathway lipid metabolism; arachidonate metabolism. Its function is as follows. A cytochrome P450 monooxygenase involved in the metabolism of various endogenous substrates, including fatty acids, steroid hormones and vitamins. Mechanistically, uses molecular oxygen inserting one oxygen atom into a substrate, and reducing the second into a water molecule, with two electrons provided by NADPH via cytochrome P450 reductase (NADPH--hemoprotein reductase). Catalyzes the hydroxylation of carbon-hydrogen bonds. Exhibits high catalytic activity for the formation of hydroxyestrogens from estrone (E1) and 17beta-estradiol (E2), namely 2-hydroxy E1 and E2. Metabolizes cholesterol toward 25-hydroxycholesterol, a physiological regulator of cellular cholesterol homeostasis. May act as a major enzyme for all-trans retinoic acid biosynthesis in the liver. Catalyzes two successive oxidative transformation of all-trans retinol to all-trans retinal and then to the active form all-trans retinoic acid. Primarily catalyzes stereoselective epoxidation of the last double bond of polyunsaturated fatty acids (PUFA), displaying a strong preference for the (R,S) stereoisomer. Catalyzes bisallylic hydroxylation and omega-1 hydroxylation of PUFA. May also participate in eicosanoids metabolism by converting hydroperoxide species into oxo metabolites (lipoxygenase-like reaction, NADPH-independent). Plays a role in the oxidative metabolism of xenobiotics. Catalyzes the N-hydroxylation of heterocyclic amines and the O-deethylation of phenacetin. Metabolizes caffeine via N3-demethylation. This Homo sapiens (Human) protein is Cytochrome P450 1A2.